A 945-amino-acid chain; its full sequence is Isoleucine--tRNA ligase (945 aa).

Positions 66–76 (PYANGDIHLGH) match the 'HIGH' region motif. Glu-581 serves as a coordination point for L-isoleucyl-5'-AMP. The 'KMSKS' region motif lies at 622 to 626 (KMSKS). Residue Lys-625 coordinates ATP. The Zn(2+) site is built by Cys-908, Cys-911, Cys-928, and Cys-931.

The protein belongs to the class-I aminoacyl-tRNA synthetase family. IleS type 1 subfamily. In terms of assembly, monomer. It depends on Zn(2+) as a cofactor.

Its subcellular location is the cytoplasm. The enzyme catalyses tRNA(Ile) + L-isoleucine + ATP = L-isoleucyl-tRNA(Ile) + AMP + diphosphate. Catalyzes the attachment of isoleucine to tRNA(Ile). As IleRS can inadvertently accommodate and process structurally similar amino acids such as valine, to avoid such errors it has two additional distinct tRNA(Ile)-dependent editing activities. One activity is designated as 'pretransfer' editing and involves the hydrolysis of activated Val-AMP. The other activity is designated 'posttransfer' editing and involves deacylation of mischarged Val-tRNA(Ile). In Paraburkholderia phytofirmans (strain DSM 17436 / LMG 22146 / PsJN) (Burkholderia phytofirmans), this protein is Isoleucine--tRNA ligase.